The primary structure comprises 82 residues: MKMDTGTKVRTILFLIAWVNQLLSFDNLEPIPVDETTAQQVYDAVSVLFTIVVTVWTSFKNNYLTLKGRKQREALKKNGLTK.

Topologically, residues 1–8 are cytoplasmic; sequence MKMDTGTK. Residues 9–25 form a helical membrane-spanning segment; that stretch reads VRTILFLIAWVNQLLSF. Topologically, residues 26–40 are periplasmic; the sequence is DNLEPIPVDETTAQQ. Residues 41 to 57 form a helical membrane-spanning segment; that stretch reads VYDAVSVLFTIVVTVWT. The Cytoplasmic portion of the chain corresponds to 58–82; that stretch reads SFKNNYLTLKGRKQREALKKNGLTK.

In terms of assembly, homomultimer. Interacts with isoform Antiholin; this interaction blocks the holin homomultimerization and delays host cell lysis.

The protein localises to the host cell inner membrane. Probably functions as a holin together with holin-like protein 26. Accumulates harmlessly in the cytoplasmic membrane until it reaches a critical concentration that triggers the formation of micron-scale pores (holes) causing host cell membrane disruption and endolysin escape into the periplasmic space. Determines the precise timing of host cell lysis. Functionally, counteracts the aggregation of the holin molecules and thus of pore formation. The protein is Putative antiholin (26) of Bacillus subtilis (Bacteriophage SPP1).